A 187-amino-acid polypeptide reads, in one-letter code: Peptide deformylase (187 aa).

The Fe cation site is built by Cys107 and His149. Glu150 is a catalytic residue. Fe cation is bound at residue His153.

The protein belongs to the polypeptide deformylase family. The cofactor is Fe(2+).

It catalyses the reaction N-terminal N-formyl-L-methionyl-[peptide] + H2O = N-terminal L-methionyl-[peptide] + formate. Its function is as follows. Removes the formyl group from the N-terminal Met of newly synthesized proteins. Requires at least a dipeptide for an efficient rate of reaction. N-terminal L-methionine is a prerequisite for activity but the enzyme has broad specificity at other positions. The sequence is that of Peptide deformylase from Picosynechococcus sp. (strain ATCC 27264 / PCC 7002 / PR-6) (Agmenellum quadruplicatum).